The chain runs to 221 residues: Glutathione S-transferase alpha-5 (221 aa).

The region spanning 3-83 (GKPVLHYFDG…YIATKYNLYG (81 aa)) is the GST N-terminal domain. The residue at position 4 (Lys-4) is an N6-succinyllysine. Glutathione contacts are provided by residues Tyr-9, Arg-45, 54-55 (QV), and 67-68 (QT). In terms of domain architecture, GST C-terminal spans 85-207 (DMKERALIDM…LQPGSQRKPF (123 aa)).

The protein belongs to the GST superfamily. Alpha family. As to quaternary structure, heterodimer of YC1 and YC2. Liver, nasal mucosa and epididymis.

It localises to the cytoplasm. The catalysed reaction is RX + glutathione = an S-substituted glutathione + a halide anion + H(+). Conjugation of reduced glutathione to a wide number of exogenous and endogenous hydrophobic electrophiles. Has substantial activity toward aflatoxin B1-8,9-epoxide. This is Glutathione S-transferase alpha-5 (Gsta5) from Rattus norvegicus (Rat).